The sequence spans 750 residues: Neprilysin (750 aa).

Polar residues predominate over residues 1 to 14 (MGKSESQMDITDIN). A disordered region spans residues 1-20 (MGKSESQMDITDINTPKPKK). Gly2 is lipidated: N-myristoyl glycine. The Cytoplasmic segment spans residues 2 to 28 (GKSESQMDITDINTPKPKKKQRWTPLE). Ser4 and Ser6 each carry phosphoserine. The Stop-transfer sequence signature appears at 16-23 (PKPKKKQR). Residues 29–51 (ISLSVLVLLLTIIAVTMIALYAT) form a helical; Signal-anchor for type II membrane protein membrane-spanning segment. The Extracellular portion of the chain corresponds to 52-750 (YDDGICKSSD…MNPEKKCRVW (699 aa)). One can recognise a Peptidase M13 domain in the interval 56-750 (ICKSSDCIKS…MNPEKKCRVW (695 aa)). Cystine bridges form between Cys57-Cys62, Cys80-Cys735, Cys88-Cys695, Cys143-Cys411, Cys234-Cys242, and Cys621-Cys747. Arg103 serves as a coordination point for a peptide. Asn145 carries an N-linked (GlcNAc...) asparagine glycan. N-linked (GlcNAc...) asparagine glycosylation is found at Asn285 and Asn325. His584 contacts Zn(2+). Glu585 is a catalytic residue. His588 serves as a coordination point for Zn(2+). The N-linked (GlcNAc...) asparagine glycan is linked to Asn628. Residue Glu647 coordinates Zn(2+). Asp651 functions as the Proton donor in the catalytic mechanism.

Belongs to the peptidase M13 family. It depends on Zn(2+) as a cofactor. Myristoylation is a determinant of membrane targeting. In terms of processing, glycosylation at Asn-628 is necessary both for surface expression and neutral endopeptidase activity.

The protein localises to the cell membrane. It carries out the reaction Preferential cleavage of polypeptides between hydrophobic residues, particularly with Phe or Tyr at P1'.. The catalysed reaction is substance P + H2O = substance P(1-9) + L-Leu-L-Met-NH2. It catalyses the reaction substance P + H2O = substance P(1-7) + L-Phe-Gly-L-Leu-L-Met-NH2. The enzyme catalyses neurotensin + H2O = neurotensin(1-11) + L-isoleucyl-L-leucine. It carries out the reaction neurotensin + H2O = neurotensin(1-10) + L-tyrosyl-L-isoleucyl-L-leucine. Its activity is regulated as follows. Inhibited in a dose dependent manner by opiorphin. Activated by K49-P1-20, a twenty-residue synthetic peptide shortened from the snake B.asper myotoxin II. Its function is as follows. Thermolysin-like specificity, but is almost confined on acting on polypeptides of up to 30 amino acids. Biologically important in the destruction of opioid peptides such as Met- and Leu-enkephalins by cleavage of a Gly-Phe bond. Catalyzes cleavage of bradykinin, substance P and neurotensin peptides. Able to cleave angiotensin-1, angiotensin-2 and angiotensin 1-9. Involved in the degradation of atrial natriuretic factor (ANF) and brain natriuretic factor (BNP(1-32)). Displays UV-inducible elastase activity toward skin preelastic and elastic fibers. This is Neprilysin from Homo sapiens (Human).